The following is a 168-amino-acid chain: Protein-export protein SecB (168 aa).

Residues 1–20 (MTDETAANGENEAGRQSQSS) are disordered.

The protein belongs to the SecB family. In terms of assembly, homotetramer, a dimer of dimers. One homotetramer interacts with 1 SecA dimer.

Its subcellular location is the cytoplasm. Its function is as follows. One of the proteins required for the normal export of preproteins out of the cell cytoplasm. It is a molecular chaperone that binds to a subset of precursor proteins, maintaining them in a translocation-competent state. It also specifically binds to its receptor SecA. This Rhodospirillum centenum (strain ATCC 51521 / SW) protein is Protein-export protein SecB.